Consider the following 174-residue polypeptide: Small ribosomal subunit protein uS5 (174 aa).

An S5 DRBM domain is found at 16–79 (LSELLVSVRR…NAAKKSMIRV (64 aa)).

This sequence belongs to the universal ribosomal protein uS5 family. In terms of assembly, part of the 30S ribosomal subunit. Contacts proteins S4 and S8.

Its function is as follows. With S4 and S12 plays an important role in translational accuracy. Located at the back of the 30S subunit body where it stabilizes the conformation of the head with respect to the body. The sequence is that of Small ribosomal subunit protein uS5 from Anaplasma marginale (strain Florida).